A 312-amino-acid polypeptide reads, in one-letter code: Methionyl-tRNA formyltransferase (312 aa).

113 to 116 (SILP) contacts (6S)-5,6,7,8-tetrahydrofolate.

This sequence belongs to the Fmt family.

The catalysed reaction is L-methionyl-tRNA(fMet) + (6R)-10-formyltetrahydrofolate = N-formyl-L-methionyl-tRNA(fMet) + (6S)-5,6,7,8-tetrahydrofolate + H(+). In terms of biological role, attaches a formyl group to the free amino group of methionyl-tRNA(fMet). The formyl group appears to play a dual role in the initiator identity of N-formylmethionyl-tRNA by promoting its recognition by IF2 and preventing the misappropriation of this tRNA by the elongation apparatus. This is Methionyl-tRNA formyltransferase from Hydrogenovibrio crunogenus (strain DSM 25203 / XCL-2) (Thiomicrospira crunogena).